The chain runs to 392 residues: Probable tRNA sulfurtransferase (392 aa).

Residues 59-166 (DEIIERVKKV…ECSFVFTKKV (108 aa)) form the THUMP domain. Residues 183–184 (LL), 208–209 (HF), Arg-265, Gly-287, and Gln-296 contribute to the ATP site.

This sequence belongs to the ThiI family.

It is found in the cytoplasm. The enzyme catalyses [ThiI sulfur-carrier protein]-S-sulfanyl-L-cysteine + a uridine in tRNA + 2 reduced [2Fe-2S]-[ferredoxin] + ATP + H(+) = [ThiI sulfur-carrier protein]-L-cysteine + a 4-thiouridine in tRNA + 2 oxidized [2Fe-2S]-[ferredoxin] + AMP + diphosphate. It carries out the reaction [ThiS sulfur-carrier protein]-C-terminal Gly-Gly-AMP + S-sulfanyl-L-cysteinyl-[cysteine desulfurase] + AH2 = [ThiS sulfur-carrier protein]-C-terminal-Gly-aminoethanethioate + L-cysteinyl-[cysteine desulfurase] + A + AMP + 2 H(+). It functions in the pathway cofactor biosynthesis; thiamine diphosphate biosynthesis. Its function is as follows. Catalyzes the ATP-dependent transfer of a sulfur to tRNA to produce 4-thiouridine in position 8 of tRNAs, which functions as a near-UV photosensor. Also catalyzes the transfer of sulfur to the sulfur carrier protein ThiS, forming ThiS-thiocarboxylate. This is a step in the synthesis of thiazole, in the thiamine biosynthesis pathway. The sulfur is donated as persulfide by IscS. The sequence is that of Probable tRNA sulfurtransferase from Alkaliphilus metalliredigens (strain QYMF).